Consider the following 207-residue polypeptide: MLVFKGKLKEHPRWEVENELYRFRNRVFSDRLGWDVESHRGLEQDSFDTPDTHWVLIEDEEGLCGCIRLLSCAQDYMLPSIFPTALAGEAPPRSSDVWELTRLAIDANRAPRMGNGVSELTCVIFREVYAFARAKGIRELVAVVSLPVERIFRRLGLPIERLGHRQAVDLGAVRGVGIRFHLDERFARAVGHPMQGEYADARELVTE.

Belongs to the autoinducer synthase family.

It carries out the reaction a fatty acyl-[ACP] + S-adenosyl-L-methionine = an N-acyl-L-homoserine lactone + S-methyl-5'-thioadenosine + holo-[ACP] + H(+). In terms of biological role, required for the synthesis of N-butanoyl-L-homoserine lactone (BHL), an autoinducer molecule which binds to AsaR. This chain is Acyl-homoserine-lactone synthase (asaI), found in Aeromonas salmonicida.